Reading from the N-terminus, the 624-residue chain is Phosphoenolpyruvate carboxykinase [GTP] (624 aa).

Residues Arg88 and 222–224 each bind substrate; that span reads YGG. Mn(2+)-binding residues include Lys231 and His250. Ser272 provides a ligand contact to substrate. 273–278 contributes to the GTP binding site; that stretch reads MCGKTS. Cys274 is an active-site residue. Asp291 provides a ligand contact to Mn(2+). 386–388 serves as a coordination point for substrate; it reads NAR. GTP-binding residues include Arg388 and Arg420.

This sequence belongs to the phosphoenolpyruvate carboxykinase [GTP] family. The cofactor is Mn(2+).

The protein localises to the cytoplasm. It carries out the reaction oxaloacetate + GTP = phosphoenolpyruvate + GDP + CO2. It functions in the pathway carbohydrate biosynthesis; gluconeogenesis. Functionally, catalyzes the conversion of oxaloacetate (OAA) to phosphoenolpyruvate (PEP), the rate-limiting step in the metabolic pathway that produces glucose from lactate and other precursors derived from the citric acid cycle. This chain is Phosphoenolpyruvate carboxykinase [GTP], found in Pyrococcus furiosus (strain ATCC 43587 / DSM 3638 / JCM 8422 / Vc1).